Reading from the N-terminus, the 411-residue chain is MADVVVGIQWGDEGKGKIVDRIAKDYDFVVRYQGGHNAGHTIVHKGVKHSLHLMPSGVLYPKCKNIISSAVVVSVKDLCEEISAFEDLENRLFVSDRAHVILPYHAKKDAFKEKSQNIGTTKKGIGPCYEDKMARSGIRMGDLLDDKILEEKLNAHFKAIEPFKKAYDLGENYEKDLMGYFKTYAPKICPFIKDTTSMLIEANQKGEKILLEGAQGTLLDIDLGTYPFVTSSNTTSASACVSTGLNPKAINEVIGITKAYSTRVGNGPFPSEDTTPMGDHLRTKGAEFGTTTKRPRRCGWLDLVALKYACALNGCTQLALMKLDVLDGIDAIKVCVAYERKGERLEIFPSDLKDCVPIYQTFKGWEKSVGVRKLDDLEPNVREYIRFIEKEVGVKIRLISTSPEREDTIFL.

GTP is bound by residues 11-17 and 39-41; these read GDEGKGK and GHT. Asp12 acts as the Proton acceptor in catalysis. Residues Asp12 and Gly39 each contribute to the Mg(2+) site. IMP-binding positions include 12-15, 37-40, Thr121, Arg135, Gln215, Thr230, and Arg294; these read DEGK and NAGH. The active-site Proton donor is the His40. Residue 290 to 296 participates in substrate binding; the sequence is TTTKRPR. GTP-binding positions include Arg296, 322-324, and 400-402; these read KLD and STS.

This sequence belongs to the adenylosuccinate synthetase family. In terms of assembly, homodimer. Mg(2+) serves as cofactor.

The protein localises to the cytoplasm. The catalysed reaction is IMP + L-aspartate + GTP = N(6)-(1,2-dicarboxyethyl)-AMP + GDP + phosphate + 2 H(+). The protein operates within purine metabolism; AMP biosynthesis via de novo pathway; AMP from IMP: step 1/2. Plays an important role in the de novo pathway of purine nucleotide biosynthesis. Catalyzes the first committed step in the biosynthesis of AMP from IMP. The protein is Adenylosuccinate synthetase of Helicobacter pylori (strain ATCC 700392 / 26695) (Campylobacter pylori).